A 488-amino-acid chain; its full sequence is Altronate oxidoreductase (488 aa).

An NAD(+)-binding site is contributed by 18–29; sequence VIQFGEGNFLRA.

Belongs to the mannitol dehydrogenase family. UxaB subfamily.

It catalyses the reaction D-altronate + NAD(+) = keto-D-tagaturonate + NADH + H(+). It functions in the pathway carbohydrate metabolism; pentose and glucuronate interconversion. This Pectobacterium atrosepticum (strain SCRI 1043 / ATCC BAA-672) (Erwinia carotovora subsp. atroseptica) protein is Altronate oxidoreductase.